Reading from the N-terminus, the 441-residue chain is N-succinylarginine dihydrolase (441 aa).

Substrate contacts are provided by residues 19–28 (AGLSFGNEAS), N110, and 137–138 (HR). The active site involves E174. R212 contributes to the substrate binding site. Residue H248 is part of the active site. D250 and N359 together coordinate substrate. Residue C365 is the Nucleophile of the active site.

It belongs to the succinylarginine dihydrolase family. In terms of assembly, homodimer.

The enzyme catalyses N(2)-succinyl-L-arginine + 2 H2O + 2 H(+) = N(2)-succinyl-L-ornithine + 2 NH4(+) + CO2. Its pathway is amino-acid degradation; L-arginine degradation via AST pathway; L-glutamate and succinate from L-arginine: step 2/5. In terms of biological role, catalyzes the hydrolysis of N(2)-succinylarginine into N(2)-succinylornithine, ammonia and CO(2). This chain is N-succinylarginine dihydrolase, found in Erwinia tasmaniensis (strain DSM 17950 / CFBP 7177 / CIP 109463 / NCPPB 4357 / Et1/99).